The chain runs to 631 residues: Peptide-N(4)-(N-acetyl-beta-glucosaminyl)asparagine amidase (631 aa).

In terms of domain architecture, PUB spans 34-97 (EAVRILLVLL…PSSNAYTLPT (64 aa)). At Ser126 the chain carries Phosphoserine. Positions 246, 249, 272, and 273 each coordinate Zn(2+). The active-site Nucleophile is the Cys296. Active-site residues include His323 and Asp340. The PAW domain occupies 441–631 (ELKGRSSGSL…YPFDLQVQLH (191 aa)).

This sequence belongs to the transglutaminase-like superfamily. PNGase family. The cofactor is Zn(2+).

The protein resides in the cytoplasm. It catalyses the reaction Hydrolysis of an N(4)-(acetyl-beta-D-glucosaminyl)asparagine residue in which the glucosamine residue may be further glycosylated, to yield a (substituted) N-acetyl-beta-D-glucosaminylamine and a peptide containing an aspartate residue.. Functionally, specifically deglycosylates the denatured form of N-linked glycoproteins in the cytoplasm and assists their proteasome-mediated degradation. Cleaves the beta-aspartyl-glucosamine (GlcNAc) of the glycan and the amide side chain of Asn, converting Asn to Asp. Prefers proteins containing high-mannose over those bearing complex type oligosaccharides. Can recognize misfolded proteins in the endoplasmic reticulum that are exported to the cytosol to be destroyed and deglycosylate them, while it has no activity toward native proteins. Deglycosylation is a prerequisite for subsequent proteasome-mediated degradation of some, but not all, misfolded glycoproteins. The protein is Peptide-N(4)-(N-acetyl-beta-glucosaminyl)asparagine amidase (Pngl) of Drosophila melanogaster (Fruit fly).